A 1264-amino-acid chain; its full sequence is Imitation switch two complex protein 1 (1264 aa).

The 108-residue stretch at 23 to 130 (VQVWHIEETG…GEVVYLRKQK (108 aa)) folds into the WAC domain. 5 disordered regions span residues 130 to 153 (KDSSTTSSNSQQSTPQPDDMVEIN), 275 to 374 (PVVA…PANA), 482 to 508 (QEIENNGLPMKNKAETTTEEDSENPSD), 627 to 655 (ATEVQKESDAKNETNSESDSKSDSDSEER), and 803 to 825 (LNKTDENTPSADGADKKDDSESN). A compositionally biased stretch (low complexity) spans 132–147 (SSTTSSNSQQSTPQPD). Composition is skewed to polar residues over residues 280–289 (RSNSANVSSP) and 299–310 (KSSGKSNTSNDA). In terms of domain architecture, DDT spans 423 to 483 (FDSFGKLLQA…IRTQTSKEQE (61 aa)).

As to quaternary structure, component of the ISW2 complex, which at least consists of ISW2, ITC1, DLS1 and DPB4. May form a stable subcomplex with ISW2.

The protein localises to the nucleus. Functions as a component of the ISW2 complex, which acts in remodeling the chromatin by catalyzing an ATP-dependent alteration in the structure of nucleosomal DNA. The ISW2 complex is involved in coordinating transcriptional repression and in inheritance of telomeric silencing. It is involved in repression of MAT a-specific genes, INO1, and early meiotic genes during mitotic growth dependent upon transcription factor UME6 and in a parallel pathway to the RPD3-SIN3 histone deacetylase complex. ITC1 is required for nucleosome-stimulated ATPase activity and chromatin-remodeling activity of the complex. Required for the repression of MATa a-specific genes. The chain is Imitation switch two complex protein 1 (ITC1) from Saccharomyces cerevisiae (strain ATCC 204508 / S288c) (Baker's yeast).